The chain runs to 143 residues: MAKKIIGFIKLQIPAGKANPSPPVGPALGQRGLNIMEFCKAFNAQTQGMEPGLPVPVVITAFADKSFTFVMKTPPATVLIKKAAKVDKGSSKPHTDKVGSITRAQAEEIAKTKMPDLTAADLDAAVRTIAGSARSMGITVEGV.

It belongs to the universal ribosomal protein uL11 family. Part of the ribosomal stalk of the 50S ribosomal subunit. Interacts with L10 and the large rRNA to form the base of the stalk. L10 forms an elongated spine to which L12 dimers bind in a sequential fashion forming a multimeric L10(L12)X complex. One or more lysine residues are methylated.

Forms part of the ribosomal stalk which helps the ribosome interact with GTP-bound translation factors. This chain is Large ribosomal subunit protein uL11, found in Burkholderia cenocepacia (strain HI2424).